A 318-amino-acid polypeptide reads, in one-letter code: Trans-prenyltransferase (318 aa).

A helical membrane pass occupies residues 1 to 21; sequence MLHLIYISIIVVLIIILISYT. Lys85, Arg88, and His122 together coordinate isopentenyl diphosphate. Mg(2+) contacts are provided by Asp129 and Asp135. Arg140 is a binding site for dimethylallyl diphosphate. Arg141 contacts isopentenyl diphosphate. Residues Lys216, Thr217, and Gln254 each contribute to the dimethylallyl diphosphate site.

It belongs to the FPP/GGPP synthase family. Asfivirus trans-prenyltransferase subfamily. The cofactor is Mg(2+).

It is found in the host endoplasmic reticulum. It localises to the host membrane. It carries out the reaction isopentenyl diphosphate + dimethylallyl diphosphate = (2E)-geranyl diphosphate + diphosphate. The catalysed reaction is isopentenyl diphosphate + (2E)-geranyl diphosphate = (2E,6E)-farnesyl diphosphate + diphosphate. The enzyme catalyses isopentenyl diphosphate + (2E,6E)-farnesyl diphosphate = (2E,6E,10E)-geranylgeranyl diphosphate + diphosphate. It catalyses the reaction isopentenyl diphosphate + (2E,6E,10E)-geranylgeranyl diphosphate = (2E,6E,10E,14E)-geranylfarnesyl diphosphate + diphosphate. It functions in the pathway isoprenoid biosynthesis; farnesyl diphosphate biosynthesis; farnesyl diphosphate from geranyl diphosphate and isopentenyl diphosphate: step 1/1. The protein operates within isoprenoid biosynthesis; geranyl diphosphate biosynthesis; geranyl diphosphate from dimethylallyl diphosphate and isopentenyl diphosphate: step 1/1. Its pathway is isoprenoid biosynthesis; geranylgeranyl diphosphate biosynthesis; geranylgeranyl diphosphate from farnesyl diphosphate and isopentenyl diphosphate: step 1/1. In terms of biological role, trans-prenyltransferase that catalyzes the sequential condensation of isopentenyl diphosphate (IPP) with different allylic diphosphates, such as dimethylallyl diphosphate (DMAPP), geranyl diphosphate (GPP), farnesyl diphosphate (FPP) and geranylgeranyl diphosphate (GGPP), farnesyl diphosphate being the best allylic substrate. The protein is Trans-prenyltransferase of African swine fever virus (isolate Tick/South Africa/Pretoriuskop Pr4/1996) (ASFV).